A 393-amino-acid polypeptide reads, in one-letter code: Na(+)/H(+) antiporter NhaA 1 (393 aa).

Transmembrane regions (helical) follow at residues 23-43, 58-78, 96-116, 126-146, 155-175, 178-198, 224-244, 265-285, 298-318, 334-354, and 367-387; these read AGGVSLMVAAALALIVANSPF, LSLTDWINDALMAVFFLLVGL, MLPGIAAAGGVILPAIIFTAF, GWAVPSATDIAFALGVLSLLG, VFLATLAILDDLAAVVIIAIF, AEISMPYLGGAFAAAIVLFVM, GVHATVAGVVTALMIPLKAAP, VAFIIVPIFGFANAGISFAGL, IMLGLFIGKQLGVFGAAWLAI, LYGVAVLCGIGFTMSIFIGLL, and IGVLAGSGLSAICGYILLRLV.

Belongs to the NhaA Na(+)/H(+) (TC 2.A.33) antiporter family.

Its subcellular location is the cell inner membrane. The enzyme catalyses Na(+)(in) + 2 H(+)(out) = Na(+)(out) + 2 H(+)(in). In terms of biological role, na(+)/H(+) antiporter that extrudes sodium in exchange for external protons. The protein is Na(+)/H(+) antiporter NhaA 1 of Brucella anthropi (strain ATCC 49188 / DSM 6882 / CCUG 24695 / JCM 21032 / LMG 3331 / NBRC 15819 / NCTC 12168 / Alc 37) (Ochrobactrum anthropi).